We begin with the raw amino-acid sequence, 260 residues long: Acetylglutamate kinase (260 aa).

Substrate contacts are provided by residues 46–47 (GG), Arg-68, and Asn-160.

Belongs to the acetylglutamate kinase family. ArgB subfamily.

The protein localises to the cytoplasm. It carries out the reaction N-acetyl-L-glutamate + ATP = N-acetyl-L-glutamyl 5-phosphate + ADP. Its pathway is amino-acid biosynthesis; L-arginine biosynthesis; N(2)-acetyl-L-ornithine from L-glutamate: step 2/4. Its function is as follows. Catalyzes the ATP-dependent phosphorylation of N-acetyl-L-glutamate. The protein is Acetylglutamate kinase of Shewanella sp. (strain W3-18-1).